Consider the following 311-residue polypeptide: Putative mitochondrial transporter UCP3 (311 aa).

Residues 1 to 10 (MVGLKPSEVP) lie on the Mitochondrial intermembrane side of the membrane. Residues 11-32 (PTTAVKFLGAGTAACFADLLTF) form a helical membrane-spanning segment. 3 Solcar repeats span residues 11–105 (PTTA…VKQF), 114–205 (SSIT…IKEK), and 214–299 (DNFP…LKRA). The Mitochondrial matrix segment spans residues 33–76 (PLDTAKVRLQIQGENQATQAARRIQYRGVLGTILTMVRTEGPRS). A helical membrane pass occupies residues 77 to 99 (PYNGLVAGLQRQMSFASIRIGLY). Residues 100–119 (DSVKQFYTPKGSDHSSITTR) are Mitochondrial intermembrane-facing. The helical transmembrane segment at 120-136 (ILAGCTTGAMAVSCAQP) threads the bilayer. Residues 137–182 (TDVVKVRFQASIHLGAGSNRKYSGTMDAYRTIAREEGVRGLWKGTL) lie on the Mitochondrial matrix side of the membrane. The helical transmembrane segment at 183–199 (PNITRNAIVNCAEMVTY) threads the bilayer. Over 200–216 (DIIKEKLLDYHLLTDNF) the chain is Mitochondrial intermembrane. A helical membrane pass occupies residues 217 to 236 (PCHLISAFGAGFCATVVASP). Topologically, residues 237 to 270 (VDVVKTRYMNSPPGQYCSPLDCMLKMVTQEGPTA) are mitochondrial matrix. Residues 271-293 (FYKGFTPSFLRLGTWNVVMFVTY) traverse the membrane as a helical segment. Residues 278–300 (SFLRLGTWNVVMFVTYEQLKRAL) are purine nucleotide binding. Over 294–311 (EQLKRALMKVQMLRESPF) the chain is Mitochondrial intermembrane.

Belongs to the mitochondrial carrier (TC 2.A.29) family. As to quaternary structure, interacts with HAX1; the interaction is direct and calcium-dependent.

It localises to the mitochondrion inner membrane. Its function is as follows. Putative transmembrane transporter that plays a role in mitochondrial metabolism via an as yet unclear mechanism. Originally, this mitochondrial protein was thought to act as a proton transmembrane transporter from the mitochondrial intermembrane space into the matrix, causing proton leaks through the inner mitochondrial membrane, thereby uncoupling mitochondrial membrane potential generation from ATP synthesis. However, this function is controversial and uncoupling may not be the function, or at least not the main function, but rather a consequence of more conventional metabolite transporter activity. In Canis lupus familiaris (Dog), this protein is Putative mitochondrial transporter UCP3.